A 333-amino-acid chain; its full sequence is Antimicrobial peptides (333 aa).

The first 23 residues, methionine 1–alanine 23, serve as a signal peptide directing secretion. The tract at residues alanine 23 to serine 52 is disordered. The propeptide at aspartate 24–aspartate 54 is acidic peptide 1. Basic and acidic residues predominate over residues proline 29–serine 43. The residue at position 55 (glutamine 55) is a Pyrrolidone carboxylic acid. Disulfide bonds link cysteine 60–cysteine 70 and cysteine 61–cysteine 74. Residues alanine 75–aspartate 102 constitute a propeptide, acidic peptide 2. Residue glutamine 103 is modified to Pyrrolidone carboxylic acid. Intrachain disulfides connect cysteine 108/cysteine 118 and cysteine 109/cysteine 122. The propeptide at glutamine 123–aspartate 148 is acidic peptide 3. Glutamine 149 is subject to Pyrrolidone carboxylic acid. Cystine bridges form between cysteine 154/cysteine 164 and cysteine 155/cysteine 168. The propeptide at glutamine 169–aspartate 196 is acidic peptide 4. A Pyrrolidone carboxylic acid modification is found at glutamine 197. 2 disulfides stabilise this stretch: cysteine 202–cysteine 212 and cysteine 203–cysteine 216. The propeptide at serine 217 to glycine 232 is acidic peptide 5. Glutamine 233 bears the Pyrrolidone carboxylic acid mark. 2 disulfides stabilise this stretch: cysteine 238–cysteine 248 and cysteine 239–cysteine 252. Positions histidine 253–aspartate 278 are cleaved as a propeptide — acidic peptide 6. Glutamine 279 is modified (pyrrolidone carboxylic acid). Disulfide bonds link cysteine 284-cysteine 294 and cysteine 285-cysteine 298. A propeptide spans glutamine 299–valine 333 (acidic peptide 7).

Post-translationally, the N-terminal of all peptides are blocked. In terms of processing, the 4 cysteine residues of all peptides are involved in intrachain disulfide bonds.

Its subcellular location is the secreted. In terms of biological role, plays a role in the defense of the germinating seed against microorganisms, by inhibiting the growth of a range of filamentous fungi and bacteria, especially Gram-positive bacteria. Not cytotoxic for cultured human cells and are the smallest known plant-derived antimicrobial peptides. Peptide IB-AMP4 has a higher antifungal activity than IB-AMP1. The sequence is that of Antimicrobial peptides (AMP) from Impatiens balsamina (Balsam).